The sequence spans 104 residues: MNDTEFHQLVDAQMQLIEESIDDSGADIDYEVTGNVMTLEFEDRSQIIINRQEPMHEIWLASKSGGFHFKLVDNKWTCSKTGMELIAMVKEECEKHAGETIDWA.

Belongs to the frataxin family.

Its function is as follows. Involved in iron-sulfur (Fe-S) cluster assembly. May act as a regulator of Fe-S biogenesis. In Vibrio campbellii (strain ATCC BAA-1116), this protein is Iron-sulfur cluster assembly protein CyaY.